We begin with the raw amino-acid sequence, 252 residues long: Lipoprotein PrgK (252 aa).

The first 17 residues, 1–17 (MIRRYLYTFLLVMTLAG), serve as a signal peptide directing secretion. C18 carries N-palmitoyl cysteine lipidation. A lipid anchor (S-diacylglycerol cysteine) is attached at C18. Residues 207 to 227 (FATSWIVLIILLSVMSAGFGV) form a helical membrane-spanning segment.

Belongs to the YscJ lipoprotein family.

It is found in the cell outer membrane. In terms of biological role, required for invasion of epithelial cells. Could be involved in protein secretion. The protein is Lipoprotein PrgK (prgK) of Salmonella typhimurium (strain LT2 / SGSC1412 / ATCC 700720).